A 190-amino-acid chain; its full sequence is Large ribosomal subunit protein uL5 (190 aa).

This sequence belongs to the universal ribosomal protein uL5 family. As to quaternary structure, part of the 50S ribosomal subunit; part of the 5S rRNA/L5/L18/L25 subcomplex. Contacts the 5S rRNA and the P site tRNA. Forms a bridge to the 30S subunit in the 70S ribosome.

In terms of biological role, this is one of the proteins that bind and probably mediate the attachment of the 5S RNA into the large ribosomal subunit, where it forms part of the central protuberance. In the 70S ribosome it contacts protein S13 of the 30S subunit (bridge B1b), connecting the 2 subunits; this bridge is implicated in subunit movement. Contacts the P site tRNA; the 5S rRNA and some of its associated proteins might help stabilize positioning of ribosome-bound tRNAs. This Bifidobacterium adolescentis (strain ATCC 15703 / DSM 20083 / NCTC 11814 / E194a) protein is Large ribosomal subunit protein uL5.